Reading from the N-terminus, the 114-residue chain is UPF0342 protein NT01CX_2274 (114 aa).

Belongs to the UPF0342 family.

The sequence is that of UPF0342 protein NT01CX_2274 from Clostridium novyi (strain NT).